A 1087-amino-acid chain; its full sequence is Gelsolin-related protein of 125 kDa (1087 aa).

The disordered stretch occupies residues 1-40 (MEEDNIVDSKEIENNVEDKKEETPSSSPSPSSSLQQQQEE). Basic and acidic residues predominate over residues 7-23 (VDSKEIENNVEDKKEET). Over residues 24 to 40 (PSSSPSPSSSLQQQQEE) the composition is skewed to low complexity. Gelsolin-like repeat units lie at residues 73–146 (PFHF…PTFL), 183–286 (FLFK…FSKW), 335–442 (GKLL…FGTE), and 465–538 (TQLF…DNFW). Residues 550–598 (INTFINENKEEKEKEEEEKEEEEEEEEEEEEEEEEEKDNNKTTTIIKHL) are a coiled coil. Residues 555–592 (NENKEEKEKEEEEKEEEEEEEEEEEEEEEEEKDNNKTT) form a disordered region. The span at 562–586 (EKEEEEKEEEEEEEEEEEEEEEEEK) shows a compositional bias: acidic residues. Residues 614 to 692 (IFKADQINPF…EQYNESPLFK (79 aa)) form a Gelsolin-like 5 repeat. A coiled-coil region spans residues 710–912 (IISYKQKLAE…ETVNEENEVG (203 aa)). 4 stretches are compositionally biased toward basic and acidic residues: residues 732 to 770 (KQQQEQEQEQQQKENNKIVEEVKEEVKEEDVKEEVKEEE), 779 to 808 (EEVKEVAKEETKEEIKEEVNDEATEVKEVN), 817 to 840 (EEVKEEVKVEVKEEEVKGEAKEEE), and 849 to 900 (EEVK…KVNE). Residues 732 to 1087 (KQQQEQEQEQ…HNRSSSLTHA (356 aa)) form a disordered region. Positions 901 to 910 (ENETVNEENE) are enriched in acidic residues. Polar residues-rich tracts occupy residues 925-939 (ANSSSTISSPENEGS) and 950-961 (EPITPSVVSSSG). Residues 983-1002 (QGRKGGRKSHGKNQPQHKKN) show a composition bias toward basic residues. The segment covering 1018–1040 (KSLNLDIDNQSFDLNSINNNNSV) has biased composition (polar residues). Low complexity predominate over residues 1047–1065 (SSPLSFSSSSINSNSTHNT). The span at 1066–1080 (PSKKNKNKNKKKHNR) shows a compositional bias: basic residues.

The protein belongs to the villin/gelsolin family. Interacts with rasD and abpC.

Its subcellular location is the cytoplasmic vesicle. Its function is as follows. Involved in phototaxis. Required for coupling photodetection to the locomotory machinery of slugs. May be essential in the natural environment for the propagation of spores. The protein is Gelsolin-related protein of 125 kDa (gnrA) of Dictyostelium discoideum (Social amoeba).